We begin with the raw amino-acid sequence, 136 residues long: Protein NrdI (136 aa).

The protein belongs to the NrdI family.

Functionally, probably involved in ribonucleotide reductase function. The sequence is that of Protein NrdI from Escherichia coli O1:K1 / APEC.